The primary structure comprises 581 residues: Penicillin-binding protein activator LpoA (581 aa).

Residues 1 to 26 (MLSILMQGLRLKKCFLPILVMFFLAG) form the signal peptide. The N-palmitoyl cysteine moiety is linked to residue Cys27. A lipid anchor (S-diacylglycerol cysteine) is attached at Cys27.

This sequence belongs to the LpoA family. As to quaternary structure, interacts with PBP1a.

It localises to the cell outer membrane. Regulator of peptidoglycan synthesis that is essential for the function of penicillin-binding protein 1A (PBP1a). In Histophilus somni (strain 129Pt) (Haemophilus somnus), this protein is Penicillin-binding protein activator LpoA.